A 362-amino-acid polypeptide reads, in one-letter code: Phosphoserine aminotransferase (362 aa).

2 residues coordinate L-glutamate: Ser9 and Arg42. Pyridoxal 5'-phosphate contacts are provided by residues 76–77 (GR), Trp102, Thr153, Asp174, and Gln197. Lys198 is subject to N6-(pyridoxal phosphate)lysine. 239 to 240 (NT) contributes to the pyridoxal 5'-phosphate binding site.

The protein belongs to the class-V pyridoxal-phosphate-dependent aminotransferase family. SerC subfamily. As to quaternary structure, homodimer. Requires pyridoxal 5'-phosphate as cofactor.

The protein resides in the cytoplasm. It catalyses the reaction O-phospho-L-serine + 2-oxoglutarate = 3-phosphooxypyruvate + L-glutamate. The catalysed reaction is 4-(phosphooxy)-L-threonine + 2-oxoglutarate = (R)-3-hydroxy-2-oxo-4-phosphooxybutanoate + L-glutamate. Its pathway is amino-acid biosynthesis; L-serine biosynthesis; L-serine from 3-phospho-D-glycerate: step 2/3. The protein operates within cofactor biosynthesis; pyridoxine 5'-phosphate biosynthesis; pyridoxine 5'-phosphate from D-erythrose 4-phosphate: step 3/5. In terms of biological role, catalyzes the reversible conversion of 3-phosphohydroxypyruvate to phosphoserine and of 3-hydroxy-2-oxo-4-phosphonooxybutanoate to phosphohydroxythreonine. This Escherichia coli O127:H6 (strain E2348/69 / EPEC) protein is Phosphoserine aminotransferase.